The chain runs to 200 residues: GTP cyclohydrolase 1 (200 aa).

Zn(2+) is bound by residues Cys87, His90, and Cys158.

This sequence belongs to the GTP cyclohydrolase I family. In terms of assembly, toroid-shaped homodecamer, composed of two pentamers of five dimers.

It catalyses the reaction GTP + H2O = 7,8-dihydroneopterin 3'-triphosphate + formate + H(+). It functions in the pathway cofactor biosynthesis; 7,8-dihydroneopterin triphosphate biosynthesis; 7,8-dihydroneopterin triphosphate from GTP: step 1/1. The polypeptide is GTP cyclohydrolase 1 (Xanthomonas euvesicatoria pv. vesicatoria (strain 85-10) (Xanthomonas campestris pv. vesicatoria)).